A 168-amino-acid polypeptide reads, in one-letter code: MSDQGTNNGESGNGGAQNGEAPQLRVLTQYVKDLSFENPNAPQSLGPADEQPSINVRVDVGVKRMSATDFEVALKIGAEATVKDKAMFLVELDYAGLFRVVNVPEQDLEAVLVIECPRQIFPFARRILADTTRDGGFPPLMIDPIDFVGLYNQRHQQAPDAAAAAKPN.

A compositionally biased stretch (polar residues) spans 1 to 10 (MSDQGTNNGE). A disordered region spans residues 1–22 (MSDQGTNNGESGNGGAQNGEAP).

It belongs to the SecB family. As to quaternary structure, homotetramer, a dimer of dimers. One homotetramer interacts with 1 SecA dimer.

Its subcellular location is the cytoplasm. Its function is as follows. One of the proteins required for the normal export of preproteins out of the cell cytoplasm. It is a molecular chaperone that binds to a subset of precursor proteins, maintaining them in a translocation-competent state. It also specifically binds to its receptor SecA. The polypeptide is Protein-export protein SecB (Parvibaculum lavamentivorans (strain DS-1 / DSM 13023 / NCIMB 13966)).